The primary structure comprises 153 residues: Small ribosomal subunit protein bS16 (153 aa).

The interval 114 to 153 (ENEPVGEAITPKKKKAKAEDAEAAADAPAEAAAESEAADK) is disordered. Residues 137-153 (AADAPAEAAAESEAADK) show a composition bias toward low complexity.

This sequence belongs to the bacterial ribosomal protein bS16 family.

This chain is Small ribosomal subunit protein bS16, found in Rhodococcus jostii (strain RHA1).